The chain runs to 107 residues: Large ribosomal subunit protein bL21 (107 aa).

Belongs to the bacterial ribosomal protein bL21 family. As to quaternary structure, part of the 50S ribosomal subunit. Contacts protein L20.

Its function is as follows. This protein binds to 23S rRNA in the presence of protein L20. The chain is Large ribosomal subunit protein bL21 from Buchnera aphidicola subsp. Schizaphis graminum (strain Sg).